The chain runs to 190 residues: Subtilisin inhibitor CLSI-II (190 aa).

Intrachain disulfides connect Cys44/Cys88 and Cys142/Cys149.

It belongs to the protease inhibitor I3 (leguminous Kunitz-type inhibitor) family. As to quaternary structure, forms active dimers on storage in aqueous solution, possibly through formation of an intermolecular disulfide bond. The N-terminal Asn is removed in about 50% of both the CLSI-II and CLSI-III chains.

The protein localises to the secreted. Inhibits subtilisin-type microbial serine proteases incuding proteinase K, subtilisin BPN', subtilisin Carlsberg and subtilisin E in a non-stoichiometric manner. Weakly inhibits A.oryzae protease and some metalloproteases including pronase E. Does not inhibit trypsin, chymotrypsin, S.griseus alkaline protease or A.lyticus lysyl endopeptidase. CLSI-II has a wider inhibitory specificity than CLSI-III. The sequence is that of Subtilisin inhibitor CLSI-II from Canavalia lineata (Beach bean).